Consider the following 329-residue polypeptide: Apolipoprotein E (329 aa).

The signal sequence occupies residues 1 to 18; the sequence is MKVLWAALVVALLAGCWA. 8 repeat units span residues 92 to 113, 114 to 135, 136 to 157, 158 to 179, 180 to 201, 202 to 223, 224 to 245, and 246 to 267. An 8 X 22 AA approximate tandem repeats region spans residues 92–267; sequence TLMEETMKEI…HLDEVREQME (176 aa). Methionine 155 is subject to Methionine sulfoxide. Serine 159 carries the phosphoserine modification. The segment at 170 to 180 is LDL and other lipoprotein receptors binding; sequence HMRKLRKRVLR. 174-177 is a binding site for heparin; that stretch reads LRKR. The lipid-binding and lipoprotein association stretch occupies residues 222–302; that stretch reads HAKVDALATQ…GWFEPLVEDM (81 aa). Heparin is bound at residue 241-248; that stretch reads GQQLRGRL. The segment at 278 to 329 is homooligomerization; that stretch reads NQMRQQAEPFQARLKGWFEPLVEDMQRQWAVLVEKVQAAVGTSPTTPPVETK. The segment at 290-302 is specificity for association with VLDL; the sequence is RLKGWFEPLVEDM.

This sequence belongs to the apolipoprotein A1/A4/E family. In terms of assembly, homotetramer. May interact with ABCA1; functionally associated with ABCA1 in the biogenesis of HDLs. May interact with APP/A4 amyloid-beta peptide; the interaction is extremely stable in vitro but its physiological significance is unclear. May interact with MAPT. May interact with MAP2. In the cerebrospinal fluid, interacts with secreted SORL1. Interacts with PMEL; this allows the loading of PMEL luminal fragment on ILVs to induce fibril nucleation. In terms of processing, APOE exists as multiple glycosylated and sialylated glycoforms within cells and in plasma. The extent of glycosylation and sialylation are tissue and context specific. Glycated in plasma VLDL. Post-translationally, phosphorylated by FAM20C in the extracellular medium.

The protein resides in the secreted. It is found in the extracellular space. It localises to the extracellular matrix. The protein localises to the extracellular vesicle. Its subcellular location is the endosome. The protein resides in the multivesicular body. Its function is as follows. APOE is an apolipoprotein, a protein associating with lipid particles, that mainly functions in lipoprotein-mediated lipid transport between organs via the plasma and interstitial fluids. APOE is a core component of plasma lipoproteins and is involved in their production, conversion and clearance. Apolipoproteins are amphipathic molecules that interact both with lipids of the lipoprotein particle core and the aqueous environment of the plasma. As such, APOE associates with chylomicrons, chylomicron remnants, very low density lipoproteins (VLDL) and intermediate density lipoproteins (IDL) but shows a preferential binding to high-density lipoproteins (HDL). It also binds a wide range of cellular receptors including the LDL receptor/LDLR, the LDL receptor-related proteins LRP1, LRP2 and LRP8 and the very low-density lipoprotein receptor/VLDLR that mediate the cellular uptake of the APOE-containing lipoprotein particles. Finally, APOE also has a heparin-binding activity and binds heparan-sulfate proteoglycans on the surface of cells, a property that supports the capture and the receptor-mediated uptake of APOE-containing lipoproteins by cells. A main function of APOE is to mediate lipoprotein clearance through the uptake of chylomicrons, VLDLs, and HDLs by hepatocytes. APOE is also involved in the biosynthesis by the liver of VLDLs as well as their uptake by peripheral tissues ensuring the delivery of triglycerides and energy storage in muscle, heart and adipose tissues. By participating in the lipoprotein-mediated distribution of lipids among tissues, APOE plays a critical role in plasma and tissues lipid homeostasis. APOE is also involved in two steps of reverse cholesterol transport, the HDLs-mediated transport of cholesterol from peripheral tissues to the liver, and thereby plays an important role in cholesterol homeostasis. First, it is functionally associated with ABCA1 in the biogenesis of HDLs in tissues. Second, it is enriched in circulating HDLs and mediates their uptake by hepatocytes. APOE also plays an important role in lipid transport in the central nervous system, regulating neuron survival and sprouting. The sequence is that of Apolipoprotein E (APOE) from Arctocephalus gazella (Antarctic fur seal).